Reading from the N-terminus, the 104-residue chain is Type IV secretion system protein PtlB homolog (104 aa).

Residues 30–50 (IALLGIWFSIAFLALFPVALL) form a helical membrane-spanning segment.

It belongs to the virB3 family.

It is found in the cell membrane. The protein is Type IV secretion system protein PtlB homolog (ptlB) of Bordetella bronchiseptica (strain ATCC BAA-588 / NCTC 13252 / RB50) (Alcaligenes bronchisepticus).